Consider the following 498-residue polypeptide: Putative antiporter subunit mnhD2 (498 aa).

The next 14 helical transmembrane spans lie at 2–22 (LSNL…ILVF), 32–52 (YLYL…LIYV), 78–98 (LSLI…AYGF), 108–128 (YHLP…FLTS), 130–150 (LFNL…LITL), 161–181 (IIYV…IGLL), 209–229 (ISLI…FMWL), 240–260 (LAAL…IRFF), 271–291 (IHPL…IGVI), 308–328 (IGFI…GAIF), 330–350 (LVND…LVYI), 369–389 (FGVA…FSGF), 403–423 (GNYI…YSLF), and 451–471 (ILSI…VVLN).

It belongs to the CPA3 antiporters (TC 2.A.63) subunit D family. May form a heterooligomeric complex that consists of seven subunits: mnhA2, mnhB2, mnhC2, mnhD2, mnhE2, mnhF2 and mnhG2.

The protein resides in the cell membrane. This chain is Putative antiporter subunit mnhD2 (mnhD2), found in Staphylococcus aureus (strain JH1).